We begin with the raw amino-acid sequence, 1025 residues long: Multidrug resistance protein MdtC (1025 aa).

The Cytoplasmic segment spans residues 1–6; that stretch reads MKFFAL. A helical membrane pass occupies residues 7-29; it reads FIYRPVATILLSVAITLCGILGF. Residues 30 to 335 lie on the Periplasmic side of the membrane; sequence RMLPVAPLPQ…TIRASLEEVE (306 aa). Residues 336-353 traverse the membrane as a helical segment; it reads QTLIISVALVILVVFLFL. At 354 to 359 the chain is on the cytoplasmic side; that stretch reads RSGRAT. Residues 360-379 traverse the membrane as a helical segment; sequence IIPAVAVPVSLIGTFAAMYL. Topologically, residues 380–388 are periplasmic; the sequence is CGFSLNNLS. Residues 389 to 411 form a helical membrane-spanning segment; it reads LMALTIATGFVVDDAIVVLENIA. The Cytoplasmic portion of the chain corresponds to 412 to 430; sequence RHLEAGMKPLQAALQGTRE. The chain crosses the membrane as a helical span at residues 431 to 453; the sequence is VGFTVLSMSLSLVAVFLPLLLMG. At 454–467 the chain is on the periplasmic side; the sequence is GLPGRLLREFAVTL. Residues 468 to 490 form a helical membrane-spanning segment; it reads SVAIGISLLVSLTLTPMMCGWML. Over 491 to 852 the chain is Cytoplasmic; the sequence is KASKPREQKR…QVFQETMNSQ (362 aa). The chain crosses the membrane as a helical span at residues 853 to 875; that stretch reads VILIIAAIATVYIVLGILYESYV. Residues 876 to 894 lie on the Periplasmic side of the membrane; it reads HPLTILSTLPSAGVGALLA. A helical membrane pass occupies residues 895 to 917; it reads LELFNAPFSLIALIGIMLLIGIV. Over 918–947 the chain is Cytoplasmic; sequence KKNAIMMVDFALEAQRHGNLTPQEAIFQAC. Residues 948-970 traverse the membrane as a helical segment; sequence LLRFRPIMMTTLAALFGALPLVL. Residues 971 to 984 lie on the Periplasmic side of the membrane; it reads SGGDGSELRQPLGI. The chain crosses the membrane as a helical span at residues 985-1007; the sequence is TIVGGLVMSQLLTLYTTPVVYLF. Over 1008 to 1025 the chain is Cytoplasmic; the sequence is FDRLRLRFSRKPKQAVTE.

It belongs to the resistance-nodulation-cell division (RND) (TC 2.A.6) family. MdtC subfamily. In terms of assembly, part of a tripartite efflux system composed of MdtA, MdtB and MdtC. MdtC forms a heteromultimer with MdtB.

It is found in the cell inner membrane. Its function is as follows. The MdtABC tripartite complex confers resistance against novobiocin and deoxycholate. The polypeptide is Multidrug resistance protein MdtC (Escherichia coli O6:H1 (strain CFT073 / ATCC 700928 / UPEC)).